The sequence spans 209 residues: Uracil phosphoribosyltransferase (209 aa).

5-phospho-alpha-D-ribose 1-diphosphate contacts are provided by residues Arg79, Arg104, and 131–139 (DPMLATGGS). Uracil contacts are provided by residues Ile194 and 199 to 201 (GDA). Residue Asp200 coordinates 5-phospho-alpha-D-ribose 1-diphosphate.

It belongs to the UPRTase family. Requires Mg(2+) as cofactor.

It catalyses the reaction UMP + diphosphate = 5-phospho-alpha-D-ribose 1-diphosphate + uracil. The protein operates within pyrimidine metabolism; UMP biosynthesis via salvage pathway; UMP from uracil: step 1/1. Its activity is regulated as follows. Allosterically activated by GTP. Functionally, catalyzes the conversion of uracil and 5-phospho-alpha-D-ribose 1-diphosphate (PRPP) to UMP and diphosphate. The polypeptide is Uracil phosphoribosyltransferase (Streptococcus mutans serotype c (strain ATCC 700610 / UA159)).